A 389-amino-acid polypeptide reads, in one-letter code: Chitin-binding protein CbpD (389 aa).

A signal peptide spans 1–25; the sequence is MKHYSATLALLPLTLALFLPQAAHA. In terms of domain architecture, Chitin-binding type-4 spans 26–208; sequence HGSMETPPSR…EAFYACIDVS (183 aa).

In terms of processing, can be detected in the extracellular supernatant as a 43 kDa protein and a 23 kDa protein, both proteins have the same N-terminus. Only the larger protein binds chitin, which may protect it from further processing and/or degradation by elastase (lasB). It is not clear whether the short form is functional or a degradation product.

It localises to the secreted. Its function is as follows. Binds chitin but does not hydrolyze it, has no detectable protease or staphylolytic activity. The protein is Chitin-binding protein CbpD of Pseudomonas aeruginosa (strain ATCC 15692 / DSM 22644 / CIP 104116 / JCM 14847 / LMG 12228 / 1C / PRS 101 / PAO1).